A 282-amino-acid polypeptide reads, in one-letter code: Aldo-keto reductase BQ2027_MB2996 (282 aa).

Tyr-57 serves as the catalytic Proton donor. NADPH is bound by residues Leu-197, Val-235, Arg-237, Ser-238, Ala-239, Arg-243, Ser-246, Asn-247, and Arg-273.

It belongs to the aldo/keto reductase family.

The protein is Aldo-keto reductase BQ2027_MB2996 of Mycobacterium bovis (strain ATCC BAA-935 / AF2122/97).